A 494-amino-acid chain; its full sequence is Glutamyl-tRNA(Gln) amidotransferase subunit A (494 aa).

Active-site charge relay system residues include Lys80 and Ser155. Ser179 functions as the Acyl-ester intermediate in the catalytic mechanism.

The protein belongs to the amidase family. GatA subfamily. Heterotrimer of A, B and C subunits.

The catalysed reaction is L-glutamyl-tRNA(Gln) + L-glutamine + ATP + H2O = L-glutaminyl-tRNA(Gln) + L-glutamate + ADP + phosphate + H(+). Its function is as follows. Allows the formation of correctly charged Gln-tRNA(Gln) through the transamidation of misacylated Glu-tRNA(Gln) in organisms which lack glutaminyl-tRNA synthetase. The reaction takes place in the presence of glutamine and ATP through an activated gamma-phospho-Glu-tRNA(Gln). The polypeptide is Glutamyl-tRNA(Gln) amidotransferase subunit A (Lachnoclostridium phytofermentans (strain ATCC 700394 / DSM 18823 / ISDg) (Clostridium phytofermentans)).